We begin with the raw amino-acid sequence, 626 residues long: DNA mismatch repair protein MutL (626 aa).

This sequence belongs to the DNA mismatch repair MutL/HexB family.

Functionally, this protein is involved in the repair of mismatches in DNA. It is required for dam-dependent methyl-directed DNA mismatch repair. May act as a 'molecular matchmaker', a protein that promotes the formation of a stable complex between two or more DNA-binding proteins in an ATP-dependent manner without itself being part of a final effector complex. This chain is DNA mismatch repair protein MutL, found in Pelodictyon phaeoclathratiforme (strain DSM 5477 / BU-1).